The chain runs to 115 residues: LQIALQTKIKLFYRPAAIKTRPNEVWQDQLILNKVSGGYRIENPTPYYVTVIGLGGSEKQAEEGEFETVMLSPRSEQTVNRNYNTPYLSYINDYGGRPVLSFICNGSRCSVKKEK.

It belongs to the periplasmic pilus chaperone family.

The protein localises to the periplasm. Its function is as follows. Mediates assembly of pili by forming soluble multimeric complexes with pili subunits as an intermediate step in the assembly process. The polypeptide is Chaperone protein PrsD (prsD) (Escherichia coli).